Here is a 412-residue protein sequence, read N- to C-terminus: Light-independent protochlorophyllide reductase subunit N (412 aa).

[4Fe-4S] cluster is bound by residues C16, C41, and C102.

Belongs to the BchN/ChlN family. As to quaternary structure, protochlorophyllide reductase is composed of three subunits; ChlL, ChlN and ChlB. Forms a heterotetramer of two ChlB and two ChlN subunits. Requires [4Fe-4S] cluster as cofactor.

It carries out the reaction chlorophyllide a + oxidized 2[4Fe-4S]-[ferredoxin] + 2 ADP + 2 phosphate = protochlorophyllide a + reduced 2[4Fe-4S]-[ferredoxin] + 2 ATP + 2 H2O. It participates in porphyrin-containing compound metabolism; chlorophyll biosynthesis (light-independent). Functionally, component of the dark-operative protochlorophyllide reductase (DPOR) that uses Mg-ATP and reduced ferredoxin to reduce ring D of protochlorophyllide (Pchlide) to form chlorophyllide a (Chlide). This reaction is light-independent. The NB-protein (ChlN-ChlB) is the catalytic component of the complex. The protein is Light-independent protochlorophyllide reductase subunit N of Synechococcus sp. (strain RCC307).